The primary structure comprises 346 residues: MEVRVANVRKEFERFPALHDVSLDIKSGELIALLGPSGSGKTTLLRLIAGLERPTRGKIFFGDEDASQKSIQERNVGFVFQHYALFRHMTVADNIGFGLKVRHGSSRPPAQEIRRRASELLDLVQLSGLEKRYPAQLSGGQRQRVALARAMAIEPKVLLLDEPFGALDAQVRRELRRWLREIHDRTGHTTVFVTHDQEEALELADRVVVMSQGRIEQVGTADDIYDTPNSPFVYGFIGESSSLPVKVENGEIWLADRPIGLSAPHAPEGEATLYFRPHDVELLDGCSGCIAGTVAASRRVAGTRRVELEIGGERQRVEIELPVGHPAAQKSRVAFRPGRWKLFPAA.

The ABC transporter domain maps to 3 to 237 (VRVANVRKEF…PNSPFVYGFI (235 aa)). 35–42 (GPSGSGKT) serves as a coordination point for ATP.

Belongs to the ABC transporter superfamily. Sulfate/tungstate importer (TC 3.A.1.6) family. In terms of assembly, the complex is composed of two ATP-binding proteins (CysA), two transmembrane proteins (CysT and CysW) and a solute-binding protein (CysP).

The protein resides in the cell inner membrane. It carries out the reaction sulfate(out) + ATP + H2O = sulfate(in) + ADP + phosphate + H(+). It catalyses the reaction thiosulfate(out) + ATP + H2O = thiosulfate(in) + ADP + phosphate + H(+). Functionally, part of the ABC transporter complex CysAWTP involved in sulfate/thiosulfate import. Responsible for energy coupling to the transport system. The sequence is that of Sulfate/thiosulfate import ATP-binding protein CysA from Mesorhizobium japonicum (strain LMG 29417 / CECT 9101 / MAFF 303099) (Mesorhizobium loti (strain MAFF 303099)).